Consider the following 128-residue polypeptide: Large ribosomal subunit protein bL17 (128 aa).

The protein belongs to the bacterial ribosomal protein bL17 family. Part of the 50S ribosomal subunit. Contacts protein L32.

The sequence is that of Large ribosomal subunit protein bL17 from Erwinia tasmaniensis (strain DSM 17950 / CFBP 7177 / CIP 109463 / NCPPB 4357 / Et1/99).